Reading from the N-terminus, the 188-residue chain is Peptide deformylase (188 aa).

Residues Cys94 and His136 each contribute to the Fe cation site. Glu137 is a catalytic residue. A Fe cation-binding site is contributed by His140.

The protein belongs to the polypeptide deformylase family. It depends on Fe(2+) as a cofactor.

It carries out the reaction N-terminal N-formyl-L-methionyl-[peptide] + H2O = N-terminal L-methionyl-[peptide] + formate. Removes the formyl group from the N-terminal Met of newly synthesized proteins. Requires at least a dipeptide for an efficient rate of reaction. N-terminal L-methionine is a prerequisite for activity but the enzyme has broad specificity at other positions. This Pelodictyon phaeoclathratiforme (strain DSM 5477 / BU-1) protein is Peptide deformylase.